A 199-amino-acid chain; its full sequence is Protein GrpE (199 aa).

Residues Tyr-20 to Glu-52 form a disordered region.

The protein belongs to the GrpE family. Homodimer.

It localises to the cytoplasm. Participates actively in the response to hyperosmotic and heat shock by preventing the aggregation of stress-denatured proteins, in association with DnaK and GrpE. It is the nucleotide exchange factor for DnaK and may function as a thermosensor. Unfolded proteins bind initially to DnaJ; upon interaction with the DnaJ-bound protein, DnaK hydrolyzes its bound ATP, resulting in the formation of a stable complex. GrpE releases ADP from DnaK; ATP binding to DnaK triggers the release of the substrate protein, thus completing the reaction cycle. Several rounds of ATP-dependent interactions between DnaJ, DnaK and GrpE are required for fully efficient folding. The protein is Protein GrpE of Legionella pneumophila (strain Corby).